Here is a 231-residue protein sequence, read N- to C-terminus: Probable cell wall protein ARB_06477 (231 aa).

The N-terminal stretch at 1–17 (MRSVLYLLFTAVAAVAA) is a signal peptide. Residues 107–206 (TPSFMVDGAT…TGMPTSSGAP (100 aa)) are disordered. Residues 121–204 (TGPTTSRTSM…SSTGMPTSSG (84 aa)) show a composition bias toward low complexity. A lipid anchor (GPI-anchor amidated serine) is attached at Ser-203. Positions 204–231 (GAPDPNGAVSLALPGGLLSIVLSLMALL) are cleaved as a propeptide — removed in mature form.

The protein belongs to the SRP1/TIP1 family. In terms of processing, the GPI-anchor is attached to the protein in the endoplasmic reticulum and serves to target the protein to the cell surface. There, the glucosamine-inositol phospholipid moiety is cleaved off and the GPI-modified mannoprotein is covalently attached via its lipidless GPI glycan remnant to the 1,6-beta-glucan of the outer cell wall layer.

It localises to the cell membrane. The protein localises to the secreted. It is found in the cell wall. In terms of biological role, probable component of the cell wall. The polypeptide is Probable cell wall protein ARB_06477 (Arthroderma benhamiae (strain ATCC MYA-4681 / CBS 112371) (Trichophyton mentagrophytes)).